A 490-amino-acid chain; its full sequence is Tandem C2 domains nuclear protein (490 aa).

Phosphoserine occurs at positions 83, 156, 168, 174, and 211. Positions 189 to 215 (HDSLSSVPSSSSSRKNSQGSNRSLDTI) are disordered. Positions 192 to 211 (LSSVPSSSSSRKNSQGSNRS) are enriched in low complexity. Thr-214 and Thr-216 each carry phosphothreonine. Ser-218 is modified (phosphoserine). C2 domains are found at residues 223 to 342 (DFGR…SLDI) and 344 to 471 (PPSK…NQWK). The Nuclear localization signal motif lies at 447-449 (RRK).

The protein resides in the nucleus. This chain is Tandem C2 domains nuclear protein (TC2N), found in Homo sapiens (Human).